The following is a 202-amino-acid chain: Peptidyl-tRNA hydrolase (202 aa).

Position 17 (Y17) interacts with tRNA. H22 functions as the Proton acceptor in the catalytic mechanism. 3 residues coordinate tRNA: F76, N78, and N124.

This sequence belongs to the PTH family. As to quaternary structure, monomer.

The protein localises to the cytoplasm. It catalyses the reaction an N-acyl-L-alpha-aminoacyl-tRNA + H2O = an N-acyl-L-amino acid + a tRNA + H(+). Hydrolyzes ribosome-free peptidyl-tRNAs (with 1 or more amino acids incorporated), which drop off the ribosome during protein synthesis, or as a result of ribosome stalling. In terms of biological role, catalyzes the release of premature peptidyl moieties from peptidyl-tRNA molecules trapped in stalled 50S ribosomal subunits, and thus maintains levels of free tRNAs and 50S ribosomes. The sequence is that of Peptidyl-tRNA hydrolase from Nitratidesulfovibrio vulgaris (strain DSM 19637 / Miyazaki F) (Desulfovibrio vulgaris).